The following is a 473-amino-acid chain: 1-aminocyclopropane-1-carboxylate synthase (473 aa).

Residues 84–85 (DY), Tyr145, and Asp151 each bind substrate. Position 273 is an N6-(pyridoxal phosphate)lysine (Lys273).

This sequence belongs to the class-I pyridoxal-phosphate-dependent aminotransferase family. As to quaternary structure, homodimer. It depends on pyridoxal 5'-phosphate as a cofactor.

It catalyses the reaction S-adenosyl-L-methionine = 1-aminocyclopropane-1-carboxylate + S-methyl-5'-thioadenosine + H(+). The enzyme catalyses (2S)-2-amino-3-butenoate + H2O = 2-oxobutanoate + NH4(+). It functions in the pathway alkene biosynthesis; ethylene biosynthesis via S-adenosyl-L-methionine; ethylene from S-adenosyl-L-methionine: step 1/2. Its activity is regulated as follows. Inhibited by L-aminoethoxyvinylglycine (AVG). Inhibited by L-vinylglycine (L-VG). Inhibited by S-methylmethionine through a L-VG ketimine intermediate. In terms of biological role, catalyzes the formation of 1-aminocyclopropane-1-carboxylate, a direct precursor of ethylene in higher plants. Also catalyzes the conversion of L-vinylglycine (L-VG) to alpha-ketobutyrate and ammonia. Can use S-methylmethionine as substrate. This is 1-aminocyclopropane-1-carboxylate synthase from Malus domestica (Apple).